The following is a 509-amino-acid chain: Type II methyltransferase M.BsoBI (509 aa).

It belongs to the N(4)/N(6)-methyltransferase family. N(4) subfamily.

The catalysed reaction is a 2'-deoxycytidine in DNA + S-adenosyl-L-methionine = an N(4)-methyl-2'-deoxycytidine in DNA + S-adenosyl-L-homocysteine + H(+). An alpha subtype methylase that recognizes the double-stranded sequence 5'-CYCGRG-3', methylates C-1 on both strands, and protects the DNA from cleavage by the BsoBI endonuclease. The polypeptide is Type II methyltransferase M.BsoBI (Geobacillus stearothermophilus (Bacillus stearothermophilus)).